Here is a 177-residue protein sequence, read N- to C-terminus: Adenine phosphoribosyltransferase (177 aa).

Belongs to the purine/pyrimidine phosphoribosyltransferase family. In terms of assembly, homodimer.

It is found in the cytoplasm. It carries out the reaction AMP + diphosphate = 5-phospho-alpha-D-ribose 1-diphosphate + adenine. The protein operates within purine metabolism; AMP biosynthesis via salvage pathway; AMP from adenine: step 1/1. Catalyzes a salvage reaction resulting in the formation of AMP, that is energically less costly than de novo synthesis. The sequence is that of Adenine phosphoribosyltransferase from Chlorobium chlorochromatii (strain CaD3).